The chain runs to 197 residues: Ribonuclease HII (197 aa).

The 187-residue stretch at 11–197 (HLIAGVDEVG…FAPVKKILGL (187 aa)) folds into the RNase H type-2 domain. Residues D17, E18, and D109 each coordinate a divalent metal cation.

The protein belongs to the RNase HII family. Mn(2+) is required as a cofactor. Mg(2+) serves as cofactor.

The protein localises to the cytoplasm. The enzyme catalyses Endonucleolytic cleavage to 5'-phosphomonoester.. In terms of biological role, endonuclease that specifically degrades the RNA of RNA-DNA hybrids. The protein is Ribonuclease HII of Actinobacillus pleuropneumoniae serotype 7 (strain AP76).